The primary structure comprises 436 residues: ATP-dependent protease ATPase subunit HslU (436 aa).

ATP contacts are provided by residues Ile18, Gly60 to Glu65, Asp250, Glu314, and Arg386.

Belongs to the ClpX chaperone family. HslU subfamily. As to quaternary structure, a double ring-shaped homohexamer of HslV is capped on each side by a ring-shaped HslU homohexamer. The assembly of the HslU/HslV complex is dependent on binding of ATP.

Its subcellular location is the cytoplasm. Functionally, ATPase subunit of a proteasome-like degradation complex; this subunit has chaperone activity. The binding of ATP and its subsequent hydrolysis by HslU are essential for unfolding of protein substrates subsequently hydrolyzed by HslV. HslU recognizes the N-terminal part of its protein substrates and unfolds these before they are guided to HslV for hydrolysis. The protein is ATP-dependent protease ATPase subunit HslU of Mesorhizobium japonicum (strain LMG 29417 / CECT 9101 / MAFF 303099) (Mesorhizobium loti (strain MAFF 303099)).